The following is a 653-amino-acid chain: Pentatricopeptide repeat-containing protein At3g14730 (653 aa).

PPR repeat units follow at residues 59–93 (NVAT…GFLD), 95–119 (SPRA…VLVF), 125–159 (DVFG…GILP), 160–193 (DKYT…GFDS), 194–224 (DCYV…LPDR), 226–260 (DSVL…GVGV), 261–295 (SRHT…GSGS), 296–326 (DIVV…MDER), 327–361 (DLFT…GIRP), 362–396 (DIVT…GLLN), 401–431 (NEFI…MRVK), 432–466 (DSAS…GVKP), 467–497 (DEIT…METV), and 503–537 (TSDH…DNPV). The segment at 538–613 (VWRSILSSCR…TPGCSWIVLK (76 aa)) is type E motif. Residues 614-644 (NGVHTFFTGNQTHPEFKSIHDWLSLVISHMH) are type E(+) motif.

The protein belongs to the PPR family. PCMP-E subfamily.

In Arabidopsis thaliana (Mouse-ear cress), this protein is Pentatricopeptide repeat-containing protein At3g14730 (PCMP-E31).